The primary structure comprises 340 residues: ATPase BagA (340 aa).

The ATP site is built by glycine 31, glycine 33, lysine 34, serine 35, threonine 36, asparagine 240, proline 316, and valine 318.

The protein belongs to the arsA ATPase family. BagA/BagB subfamily. In terms of assembly, forms a heterodimer composed of BagA and BagB. Interacts with Rv1509. Also interacts with a large number of proteins, including proteins required for mycolic acid biosynthesis.

Its activity is regulated as follows. The ATPase activity of the BagAB complex is not stimulated by antimonite, an arsenite substitute, suggesting that BagAB is not a transporter for this family of elements. Component of the heterodimeric BagAB ATPase complex, whose two subunits are actively involved in ATP hydrolysis. The ATPase activity is required to mediate resistance against nitric oxide (NO) and elevated levels of glycerol. This chain is ATPase BagA, found in Mycobacterium tuberculosis (strain ATCC 25618 / H37Rv).